Here is a 271-residue protein sequence, read N- to C-terminus: 4-hydroxy-tetrahydrodipicolinate reductase (271 aa).

Residues Gly10–Met15, Glu36, Gly100–Thr102, and Ser124–Met127 each bind NAD(+). His157 (proton donor/acceptor) is an active-site residue. His158 contributes to the (S)-2,3,4,5-tetrahydrodipicolinate binding site. The Proton donor role is filled by Lys161. Gly167–Thr168 is a (S)-2,3,4,5-tetrahydrodipicolinate binding site.

The protein belongs to the DapB family.

It is found in the cytoplasm. It catalyses the reaction (S)-2,3,4,5-tetrahydrodipicolinate + NAD(+) + H2O = (2S,4S)-4-hydroxy-2,3,4,5-tetrahydrodipicolinate + NADH + H(+). It carries out the reaction (S)-2,3,4,5-tetrahydrodipicolinate + NADP(+) + H2O = (2S,4S)-4-hydroxy-2,3,4,5-tetrahydrodipicolinate + NADPH + H(+). It participates in amino-acid biosynthesis; L-lysine biosynthesis via DAP pathway; (S)-tetrahydrodipicolinate from L-aspartate: step 4/4. In terms of biological role, catalyzes the conversion of 4-hydroxy-tetrahydrodipicolinate (HTPA) to tetrahydrodipicolinate. This chain is 4-hydroxy-tetrahydrodipicolinate reductase, found in Bradyrhizobium diazoefficiens (strain JCM 10833 / BCRC 13528 / IAM 13628 / NBRC 14792 / USDA 110).